Reading from the N-terminus, the 152-residue chain is Transcriptional regulator MraZ (152 aa).

SpoVT-AbrB domains are found at residues 5-52 (ATLV…PLPE) and 81-124 (ASEC…DETT).

Belongs to the MraZ family. In terms of assembly, dodecamer.

The protein localises to the cytoplasm. The protein resides in the nucleoid. Functionally, negatively regulates its own expression and that of the subsequent genes in the proximal part of the division and cell wall (dcw) gene cluster. Acts by binding directly to DNA. May also regulate the expression of genes outside the dcw cluster. The sequence is that of Transcriptional regulator MraZ from Escherichia coli (strain K12).